Reading from the N-terminus, the 333-residue chain is Anthranilate phosphoribosyltransferase (333 aa).

5-phospho-alpha-D-ribose 1-diphosphate-binding positions include glycine 81, 84–85 (GN), threonine 89, 91–94 (NIST), 109–117 (KHGNRSVSS), and alanine 121. Anthranilate is bound at residue glycine 81. Mg(2+) is bound at residue serine 93. Residue asparagine 112 coordinates anthranilate. Arginine 167 lines the anthranilate pocket. Aspartate 225 and glutamate 226 together coordinate Mg(2+).

It belongs to the anthranilate phosphoribosyltransferase family. In terms of assembly, homodimer. The cofactor is Mg(2+).

The catalysed reaction is N-(5-phospho-beta-D-ribosyl)anthranilate + diphosphate = 5-phospho-alpha-D-ribose 1-diphosphate + anthranilate. It participates in amino-acid biosynthesis; L-tryptophan biosynthesis; L-tryptophan from chorismate: step 2/5. Its function is as follows. Catalyzes the transfer of the phosphoribosyl group of 5-phosphorylribose-1-pyrophosphate (PRPP) to anthranilate to yield N-(5'-phosphoribosyl)-anthranilate (PRA). In Haemophilus influenzae (strain ATCC 51907 / DSM 11121 / KW20 / Rd), this protein is Anthranilate phosphoribosyltransferase.